The chain runs to 223 residues: Kynurenine formamidase (223 aa).

Phe-34 is a substrate binding site. Positions 64, 68, and 70 each coordinate Zn(2+). The active-site Proton donor/acceptor is the His-74. The Zn(2+) site is built by His-174 and Glu-186.

Belongs to the Cyclase 1 superfamily. KynB family. In terms of assembly, homodimer. It depends on Zn(2+) as a cofactor.

It catalyses the reaction N-formyl-L-kynurenine + H2O = L-kynurenine + formate + H(+). It functions in the pathway amino-acid degradation; L-tryptophan degradation via kynurenine pathway; L-kynurenine from L-tryptophan: step 2/2. In terms of biological role, catalyzes the hydrolysis of N-formyl-L-kynurenine to L-kynurenine, the second step in the kynurenine pathway of tryptophan degradation. In Polaromonas naphthalenivorans (strain CJ2), this protein is Kynurenine formamidase.